A 215-amino-acid chain; its full sequence is Adenylate kinase (215 aa).

Residue 10–15 (GAGKGT) coordinates ATP. Residues 30 to 59 (STGDMLRAAVKAETELGLKAKSVMDSGGLV) are NMP. AMP is bound by residues T31, R36, 57–59 (GLV), 85–88 (GFPR), and Q92. The LID stretch occupies residues 122–159 (GRRVHEGSGRIYHTIFNPPKVECIDDVTGEPLLQRKDD). Residues R123 and 132–133 (IY) each bind ATP. AMP-binding residues include R156 and R167. Residue G201 participates in ATP binding.

It belongs to the adenylate kinase family. Monomer.

Its subcellular location is the cytoplasm. It carries out the reaction AMP + ATP = 2 ADP. It functions in the pathway purine metabolism; AMP biosynthesis via salvage pathway; AMP from ADP: step 1/1. Its function is as follows. Catalyzes the reversible transfer of the terminal phosphate group between ATP and AMP. Plays an important role in cellular energy homeostasis and in adenine nucleotide metabolism. In Pseudomonas savastanoi pv. phaseolicola (strain 1448A / Race 6) (Pseudomonas syringae pv. phaseolicola (strain 1448A / Race 6)), this protein is Adenylate kinase.